Consider the following 160-residue polypeptide: Cytochrome b6-f complex subunit 4 (160 aa).

3 helical membrane passes run 36 to 56 (LLYV…ALAV), 95 to 115 (LLGV…PFIE), and 131 to 151 (TVFL…ALPL).

Belongs to the cytochrome b family. PetD subfamily. As to quaternary structure, the 4 large subunits of the cytochrome b6-f complex are cytochrome b6, subunit IV (17 kDa polypeptide, PetD), cytochrome f and the Rieske protein, while the 4 small subunits are PetG, PetL, PetM and PetN. The complex functions as a dimer.

The protein localises to the cellular thylakoid membrane. Component of the cytochrome b6-f complex, which mediates electron transfer between photosystem II (PSII) and photosystem I (PSI), cyclic electron flow around PSI, and state transitions. The chain is Cytochrome b6-f complex subunit 4 from Desmonostoc sp. (strain PCC 7906) (Nostoc sp. (strain PCC 7906)).